The sequence spans 157 residues: Selenoprotein F (157 aa).

Residues methionine 1–alanine 19 form the signal peptide. A non-standard amino acid (selenocysteine) is located at residue selenocysteine 84.

The protein belongs to the selenoprotein M/F family. Expressed in the brain, liver and retina. Localized to the retinal ganglion cell layer, the inner nuclear layer and the outer nuclear layer at both parr and smolt stages.

It localises to the endoplasmic reticulum lumen. Functionally, may be involved in redox reactions associated with the formation of disulfide bonds. May contribute to the quality control of protein folding in the endoplasmic reticulum. May be involved in retinal development. This is Selenoprotein F from Oncorhynchus mykiss (Rainbow trout).